A 360-amino-acid polypeptide reads, in one-letter code: Glutamate 5-kinase (360 aa).

Lys7 contributes to the ATP binding site. Substrate is bound by residues Ser47, Asp134, and Asn146. ATP contacts are provided by residues 166–167 (TD) and 208–214 (TGGIKTK). In terms of domain architecture, PUA spans 273-344 (VGEIHLDDGA…IGINSRSETT (72 aa)).

The protein belongs to the glutamate 5-kinase family.

Its subcellular location is the cytoplasm. The enzyme catalyses L-glutamate + ATP = L-glutamyl 5-phosphate + ADP. It functions in the pathway amino-acid biosynthesis; L-proline biosynthesis; L-glutamate 5-semialdehyde from L-glutamate: step 1/2. In terms of biological role, catalyzes the transfer of a phosphate group to glutamate to form L-glutamate 5-phosphate. This chain is Glutamate 5-kinase, found in Prochlorococcus marinus (strain NATL2A).